A 967-amino-acid polypeptide reads, in one-letter code: uncharacterized protein (967 aa).

Positions 1 to 29 (MKKKLKSVLIWFLIFTFNLSLGSFREVFA) are cleaved as a signal peptide. BIG2 domains lie at 38–107 (TAIT…QDGS) and 133–190 (LPVG…VNDG).

This is an uncharacterized protein from Clostridium acetobutylicum (strain ATCC 824 / DSM 792 / JCM 1419 / IAM 19013 / LMG 5710 / NBRC 13948 / NRRL B-527 / VKM B-1787 / 2291 / W).